The primary structure comprises 988 residues: DExH-box ATP-dependent RNA helicase DExH9 (988 aa).

The tract at residues 1-27 (MGSVKRKSVEESSDSAPPQKVQREDDS) is disordered. Residues 76–232 (IKCLDNGESV…WVAKVHQQPC (157 aa)) form the Helicase ATP-binding domain. 89–96 (AHTSAGKT) lines the ATP pocket. The DEVH box motif lies at 180-183 (DEVH). The Helicase C-terminal domain maps to 307–509 (DIFKLVKMII…SYNMLLNQLR (203 aa)).

Belongs to the DExH box helicase family. SKI2 subfamily. As to expression, ubiquitous but preferentially expressed in active tissues.

Its subcellular location is the nucleus. It localises to the nucleolus. It carries out the reaction ATP + H2O = ADP + phosphate + H(+). ATP-dependent RNA helicase that associates with the RNA exosome complex. Required for proper rRNA biogenesis and development. Involved in the 3'-processing of the 7S pre-RNA to the mature 5.8S rRNA and also in the removal of rRNA maturation by-products. The sequence is that of DExH-box ATP-dependent RNA helicase DExH9 from Arabidopsis thaliana (Mouse-ear cress).